The primary structure comprises 780 residues: uncharacterized protein (780 aa).

In terms of domain architecture, BTB spans 10 to 80; sequence NNNIIKLNIG…MRTGTFTLPY (71 aa).

This is an uncharacterized protein from Dictyostelium discoideum (Social amoeba).